Here is a 409-residue protein sequence, read N- to C-terminus: Glutamyl-tRNA(Gln) amidotransferase subunit D (409 aa).

The 323-residue stretch at 68-390 folds into the Asparaginase/glutaminase domain; that stretch reads RKISVLATGG…DLFRDLFRKN (323 aa). Residues threonine 78, threonine 152, aspartate 153, and lysine 230 contribute to the active site.

This sequence belongs to the asparaginase 1 family. GatD subfamily. As to quaternary structure, heterodimer of GatD and GatE.

It catalyses the reaction L-glutamyl-tRNA(Gln) + L-glutamine + ATP + H2O = L-glutaminyl-tRNA(Gln) + L-glutamate + ADP + phosphate + H(+). Functionally, allows the formation of correctly charged Gln-tRNA(Gln) through the transamidation of misacylated Glu-tRNA(Gln) in organisms which lack glutaminyl-tRNA synthetase. The reaction takes place in the presence of glutamine and ATP through an activated gamma-phospho-Glu-tRNA(Gln). The GatDE system is specific for glutamate and does not act on aspartate. This chain is Glutamyl-tRNA(Gln) amidotransferase subunit D, found in Thermoplasma acidophilum (strain ATCC 25905 / DSM 1728 / JCM 9062 / NBRC 15155 / AMRC-C165).